The chain runs to 540 residues: Chaperonin GroEL (540 aa).

Residues 29–32 (TLGP), 86–90 (DGTTT), glycine 413, and aspartate 493 each bind ATP. Residues 520–540 (AEKPEPKPAPGPADPGAGMDF) are disordered.

It belongs to the chaperonin (HSP60) family. Forms a cylinder of 14 subunits composed of two heptameric rings stacked back-to-back. Interacts with the co-chaperonin GroES.

It is found in the cytoplasm. It carries out the reaction ATP + H2O + a folded polypeptide = ADP + phosphate + an unfolded polypeptide.. Its function is as follows. Together with its co-chaperonin GroES, plays an essential role in assisting protein folding. The GroEL-GroES system forms a nano-cage that allows encapsulation of the non-native substrate proteins and provides a physical environment optimized to promote and accelerate protein folding. This is Chaperonin GroEL from Tropheryma whipplei (Whipple's bacillus).